A 352-amino-acid polypeptide reads, in one-letter code: Chorismate synthase (352 aa).

Arginine 48 is a binding site for NADP(+). Residues 125-127 (RSS), 238-239 (NA), glycine 278, 293-297 (KPTSS), and arginine 319 each bind FMN.

The protein belongs to the chorismate synthase family. Homotetramer. The cofactor is FMNH2.

The enzyme catalyses 5-O-(1-carboxyvinyl)-3-phosphoshikimate = chorismate + phosphate. The protein operates within metabolic intermediate biosynthesis; chorismate biosynthesis; chorismate from D-erythrose 4-phosphate and phosphoenolpyruvate: step 7/7. Its function is as follows. Catalyzes the anti-1,4-elimination of the C-3 phosphate and the C-6 proR hydrogen from 5-enolpyruvylshikimate-3-phosphate (EPSP) to yield chorismate, which is the branch point compound that serves as the starting substrate for the three terminal pathways of aromatic amino acid biosynthesis. This reaction introduces a second double bond into the aromatic ring system. In Legionella pneumophila (strain Lens), this protein is Chorismate synthase.